The sequence spans 153 residues: Protein eva-1 homolog A (153 aa).

Residues 37 to 57 (ALYFVCGVCLGLVLTLIALVV) traverse the membrane as a helical segment. The disordered stretch occupies residues 66 to 97 (KTQQAPKKTGKTVENTSDTSDSDSDWDNTSDL).

Belongs to the EVA1 family.

It is found in the endoplasmic reticulum membrane. Its subcellular location is the lysosome membrane. Acts as a regulator of programmed cell death, mediating both autophagy and apoptosis. This chain is Protein eva-1 homolog A (Eva1a), found in Danio rerio (Zebrafish).